The chain runs to 104 residues: uncharacterized protein (104 aa).

2 consecutive transmembrane segments (helical) span residues 53-73 (IWGI…NWDF) and 74-94 (ILNL…LILI).

It is found in the cell membrane. This is an uncharacterized protein from Methanocaldococcus jannaschii (strain ATCC 43067 / DSM 2661 / JAL-1 / JCM 10045 / NBRC 100440) (Methanococcus jannaschii).